Here is a 159-residue protein sequence, read N- to C-terminus: 2-C-methyl-D-erythritol 2,4-cyclodiphosphate synthase (159 aa).

A divalent metal cation contacts are provided by Asp-10 and His-12. 4-CDP-2-C-methyl-D-erythritol 2-phosphate contacts are provided by residues 10–12 (DVH) and 37–38 (HS). Residue His-45 participates in a divalent metal cation binding. 4-CDP-2-C-methyl-D-erythritol 2-phosphate-binding positions include 59 to 61 (DIG), 64 to 68 (FPDTD), 103 to 109 (AQAPKML), 135 to 138 (TTTE), Phe-142, and Arg-145.

This sequence belongs to the IspF family. As to quaternary structure, homotrimer. The cofactor is a divalent metal cation.

It carries out the reaction 4-CDP-2-C-methyl-D-erythritol 2-phosphate = 2-C-methyl-D-erythritol 2,4-cyclic diphosphate + CMP. It participates in isoprenoid biosynthesis; isopentenyl diphosphate biosynthesis via DXP pathway; isopentenyl diphosphate from 1-deoxy-D-xylulose 5-phosphate: step 4/6. In terms of biological role, involved in the biosynthesis of isopentenyl diphosphate (IPP) and dimethylallyl diphosphate (DMAPP), two major building blocks of isoprenoid compounds. Catalyzes the conversion of 4-diphosphocytidyl-2-C-methyl-D-erythritol 2-phosphate (CDP-ME2P) to 2-C-methyl-D-erythritol 2,4-cyclodiphosphate (ME-CPP) with a corresponding release of cytidine 5-monophosphate (CMP). This chain is 2-C-methyl-D-erythritol 2,4-cyclodiphosphate synthase, found in Francisella philomiragia subsp. philomiragia (strain ATCC 25017 / CCUG 19701 / FSC 153 / O#319-036).